Here is a 377-residue protein sequence, read N- to C-terminus: tRNA-specific 2-thiouridylase MnmA (377 aa).

ATP-binding positions include 8-15 (GMSGGVDS) and Met34. The tract at residues 94 to 96 (NPD) is interaction with target base in tRNA. The active-site Nucleophile is the Cys99. Cysteines 99 and 201 form a disulfide. Residue Gly123 participates in ATP binding. Residues 151-153 (KDQ) form an interaction with tRNA region. The active-site Cysteine persulfide intermediate is the Cys201. The interval 315-316 (RY) is interaction with tRNA.

The protein belongs to the MnmA/TRMU family.

Its subcellular location is the cytoplasm. The enzyme catalyses S-sulfanyl-L-cysteinyl-[protein] + uridine(34) in tRNA + AH2 + ATP = 2-thiouridine(34) in tRNA + L-cysteinyl-[protein] + A + AMP + diphosphate + H(+). Its function is as follows. Catalyzes the 2-thiolation of uridine at the wobble position (U34) of tRNA, leading to the formation of s(2)U34. This is tRNA-specific 2-thiouridylase MnmA from Acinetobacter baumannii (strain SDF).